The primary structure comprises 306 residues: Glutaminase (306 aa).

Residues serine 64, asparagine 115, glutamate 159, asparagine 166, tyrosine 190, tyrosine 242, and valine 260 each coordinate substrate.

Belongs to the glutaminase family. Homotetramer.

It carries out the reaction L-glutamine + H2O = L-glutamate + NH4(+). The sequence is that of Glutaminase from Aliivibrio fischeri (strain ATCC 700601 / ES114) (Vibrio fischeri).